A 190-amino-acid polypeptide reads, in one-letter code: Carbonic anhydrase 2 (190 aa).

The protein belongs to the beta-class carbonic anhydrase family. In terms of assembly, homohexamer.

It localises to the cytoplasm. The catalysed reaction is hydrogencarbonate + H(+) = CO2 + H2O. Functionally, reversible hydration of carbon dioxide. The protein is Carbonic anhydrase 2 of Flaveria linearis (Narrowleaf yellowtops).